Here is a 335-residue protein sequence, read N- to C-terminus: Pyridoxal 5'-phosphate synthase subunit PdxS (335 aa).

D-ribose 5-phosphate is bound at residue aspartate 30. The Schiff-base intermediate with D-ribose 5-phosphate role is filled by lysine 87. Glycine 159 contributes to the D-ribose 5-phosphate binding site. Arginine 171 contributes to the D-glyceraldehyde 3-phosphate binding site. D-ribose 5-phosphate contacts are provided by residues glycine 257 and 278–279 (GS).

This sequence belongs to the PdxS/SNZ family. Homohexamer. In the presence of PdxT, forms a dodecamer of heterodimers.

It carries out the reaction aldehydo-D-ribose 5-phosphate + D-glyceraldehyde 3-phosphate + L-glutamine = pyridoxal 5'-phosphate + L-glutamate + phosphate + 3 H2O + H(+). Its pathway is cofactor biosynthesis; pyridoxal 5'-phosphate biosynthesis. In terms of biological role, catalyzes the formation of pyridoxal 5'-phosphate from ribose 5-phosphate (RBP), glyceraldehyde 3-phosphate (G3P) and ammonia. The ammonia is provided by the PdxT subunit. Can also use ribulose 5-phosphate and dihydroxyacetone phosphate as substrates, resulting from enzyme-catalyzed isomerization of RBP and G3P, respectively. The sequence is that of Pyridoxal 5'-phosphate synthase subunit PdxS from Pyrococcus horikoshii (strain ATCC 700860 / DSM 12428 / JCM 9974 / NBRC 100139 / OT-3).